Here is a 278-residue protein sequence, read N- to C-terminus: Undecaprenyl-diphosphatase (278 aa).

The next 8 helical transmembrane spans lie at 3-23 (YILI…IPIS), 42-62 (VAYS…IFYF), 88-108 (FLVI…LFVI), 112-132 (ILGL…IVIY), 152-172 (IIIV…RSGM), 190-210 (LSFI…VLFS), 225-245 (GLLI…NALL), and 253-273 (VVLL…LSDI).

It belongs to the UppP family.

The protein localises to the cell membrane. The enzyme catalyses di-trans,octa-cis-undecaprenyl diphosphate + H2O = di-trans,octa-cis-undecaprenyl phosphate + phosphate + H(+). Catalyzes the dephosphorylation of undecaprenyl diphosphate (UPP). This is Undecaprenyl-diphosphatase from Saccharolobus solfataricus (strain ATCC 35092 / DSM 1617 / JCM 11322 / P2) (Sulfolobus solfataricus).